Consider the following 203-residue polypeptide: MSKASSFVREYKLVMVGGGGVGKSALTIQFIQSHFVDEYDPTIEDSYRKQCVIDSETALLDVLDTAGQEEYSAMREQYMRNGEGFLLVYSITSRLSFEEITTFYQQICRVKDRDYFPMVLVGNKCDLEGDRQVSSQEGRDLAKNFGCQFIETSAKQRINVDEAFFEVVRDIRRYNKEQETRGHDQFGIQDAPDVASDKCCILM.

17-24 (GGGGVGKS) serves as a coordination point for GTP. Positions 39-47 (YDPTIEDSY) match the Effector region motif. GTP is bound by residues 64 to 68 (DTAGQ) and 123 to 126 (NKCD). Cys200 carries the post-translational modification Cysteine methyl ester. Residue Cys200 is the site of S-farnesyl cysteine attachment. The propeptide at 201–203 (ILM) is removed in mature form.

This sequence belongs to the small GTPase superfamily. Ras family.

It is found in the cell membrane. It carries out the reaction GTP + H2O = GDP + phosphate + H(+). With respect to regulation, alternates between an inactive form bound to GDP and an active form bound to GTP. Activated by a guanine nucleotide-exchange factor (GEF) and inactivated by a GTPase-activating protein (GAP). The polypeptide is Ras-like protein 1 (RAS1) (Mucor circinelloides f. lusitanicus (Mucor racemosus var. lusitanicus)).